We begin with the raw amino-acid sequence, 1099 residues long: Carbamoyl phosphate synthase large chain (1099 aa).

Positions 1–402 (MPKREDIKRI…ALGKALRSLE (402 aa)) are carboxyphosphate synthetic domain. Residues R129, R169, G175, G176, E208, V210, E215, G241, I242, H243, Q285, and E299 each contribute to the ATP site. In terms of domain architecture, ATP-grasp 1 spans 133–328 (KETMEKAGLE…IAKVAALLAV (196 aa)). Positions 285, 299, and 301 each coordinate Mg(2+). The Mn(2+) site is built by Q285, E299, and N301. Residues 403-541 (LDAAPKLDLE…STYNGVENEA (139 aa)) are oligomerization domain. Residues 542–944 (VPSDREKIMI…AFAKAQIAAG (403 aa)) are carbamoyl phosphate synthetic domain. One can recognise an ATP-grasp 2 domain in the interval 666–857 (AKLLKQIGLK…VARIAAKIMV (192 aa)). Residues R702, K741, L743, E748, G773, V774, H775, S776, Q816, and E828 each coordinate ATP. Mg(2+)-binding residues include Q816, E828, and N830. Residues Q816, E828, and N830 each coordinate Mn(2+). The MGS-like domain maps to 945–1099 (NPLPTTGAIL…VRRLTDTWKM (155 aa)). The segment at 945 to 1099 (NPLPTTGAIL…VRRLTDTWKM (155 aa)) is allosteric domain.

This sequence belongs to the CarB family. In terms of assembly, composed of two chains; the small (or glutamine) chain promotes the hydrolysis of glutamine to ammonia, which is used by the large (or ammonia) chain to synthesize carbamoyl phosphate. Tetramer of heterodimers (alpha,beta)4. Mg(2+) serves as cofactor. Requires Mn(2+) as cofactor.

The enzyme catalyses hydrogencarbonate + L-glutamine + 2 ATP + H2O = carbamoyl phosphate + L-glutamate + 2 ADP + phosphate + 2 H(+). The catalysed reaction is hydrogencarbonate + NH4(+) + 2 ATP = carbamoyl phosphate + 2 ADP + phosphate + 2 H(+). Its pathway is amino-acid biosynthesis; L-arginine biosynthesis; carbamoyl phosphate from bicarbonate: step 1/1. The protein operates within pyrimidine metabolism; UMP biosynthesis via de novo pathway; (S)-dihydroorotate from bicarbonate: step 1/3. In terms of biological role, large subunit of the glutamine-dependent carbamoyl phosphate synthetase (CPSase). CPSase catalyzes the formation of carbamoyl phosphate from the ammonia moiety of glutamine, carbonate, and phosphate donated by ATP, constituting the first step of 2 biosynthetic pathways, one leading to arginine and/or urea and the other to pyrimidine nucleotides. The large subunit (synthetase) binds the substrates ammonia (free or transferred from glutamine from the small subunit), hydrogencarbonate and ATP and carries out an ATP-coupled ligase reaction, activating hydrogencarbonate by forming carboxy phosphate which reacts with ammonia to form carbamoyl phosphate. The polypeptide is Carbamoyl phosphate synthase large chain (Thermotoga petrophila (strain ATCC BAA-488 / DSM 13995 / JCM 10881 / RKU-1)).